A 314-amino-acid chain; its full sequence is Solute carrier family 25 member 44 (314 aa).

3 Solcar repeats span residues Lys-18 to Phe-100, Ser-107 to Gln-210, and Pro-220 to Leu-302. The next 6 membrane-spanning stretches (helical) occupy residues Phe-20–Arg-42, Ala-71–Tyr-90, Leu-113–Val-133, Gly-185–Trp-201, Ile-222–Leu-239, and Leu-278–Tyr-296.

The protein belongs to the mitochondrial carrier (TC 2.A.29) family. In terms of tissue distribution, highly expressed in brown adipose tissues compared with other metabolic organs.

It localises to the mitochondrion membrane. The enzyme catalyses L-valine(in) = L-valine(out). It catalyses the reaction L-leucine(in) = L-leucine(out). Functionally, mitochondrial solute transporter which transports branched-chain amino acid (BCAA; valine, leucine and isoleucine) into mitochondria in brown adipose tissue (BAT). BAT is involved in BCAA catabolism and actively utilizes BCAA in the mitochondria for thermogenesis. The polypeptide is Solute carrier family 25 member 44 (Mus musculus (Mouse)).